A 279-amino-acid chain; its full sequence is Dihydropteroate synthase type-1 (279 aa).

The Pterin-binding domain occupies 1-258 (MVTVFGILNL…APGDLRSAIT (258 aa)). Asn-9 is a binding site for Mg(2+). Residues Asp-82, Asn-101, Asp-173, Lys-212, and 246-248 (RTH) contribute to the (7,8-dihydropterin-6-yl)methyl diphosphate site.

This sequence belongs to the DHPS family. In terms of assembly, homodimer or homotrimer. Requires Mg(2+) as cofactor.

The enzyme catalyses (7,8-dihydropterin-6-yl)methyl diphosphate + 4-aminobenzoate = 7,8-dihydropteroate + diphosphate. Its pathway is cofactor biosynthesis; tetrahydrofolate biosynthesis; 7,8-dihydrofolate from 2-amino-4-hydroxy-6-hydroxymethyl-7,8-dihydropteridine diphosphate and 4-aminobenzoate: step 1/2. Its function is as follows. Catalyzes the condensation of para-aminobenzoate (pABA) with 6-hydroxymethyl-7,8-dihydropterin diphosphate (DHPt-PP) to form 7,8-dihydropteroate (H2Pte), the immediate precursor of folate derivatives. The sequence is that of Dihydropteroate synthase type-1 (sulI) from Corynebacterium glutamicum (Brevibacterium saccharolyticum).